The primary structure comprises 196 residues: Molybdenum cofactor guanylyltransferase (196 aa).

GTP contacts are provided by residues 10-12, K23, N51, D69, and D99; that span reads LAG. D99 serves as a coordination point for Mg(2+).

It belongs to the MobA family. In terms of assembly, monomer. The cofactor is Mg(2+).

It is found in the cytoplasm. It catalyses the reaction Mo-molybdopterin + GTP + H(+) = Mo-molybdopterin guanine dinucleotide + diphosphate. Functionally, transfers a GMP moiety from GTP to Mo-molybdopterin (Mo-MPT) cofactor (Moco or molybdenum cofactor) to form Mo-molybdopterin guanine dinucleotide (Mo-MGD) cofactor. This chain is Molybdenum cofactor guanylyltransferase, found in Shewanella sp. (strain W3-18-1).